The chain runs to 589 residues: Malto-oligosyltrehalose trehalohydrolase (589 aa).

256-261 is a binding site for substrate; it reads GFDAVH. Asp258 functions as the Nucleophile in the catalytic mechanism. The Proton donor role is filled by Glu295. Substrate-binding positions include 320–324 and 390–395; these read DDFHT and HDQIGN.

It belongs to the glycosyl hydrolase 13 family.

The protein resides in the cytoplasm. It catalyses the reaction hydrolysis of (1-&gt;4)-alpha-D-glucosidic linkage in 4-alpha-D-[(1-&gt;4)-alpha-D-glucanosyl]n trehalose to yield trehalose and (1-&gt;4)-alpha-D-glucan.. It participates in glycan biosynthesis; trehalose biosynthesis. This chain is Malto-oligosyltrehalose trehalohydrolase (treZ), found in Brevibacterium helvolum.